We begin with the raw amino-acid sequence, 636 residues long: Interleukin-27 receptor subunit alpha (636 aa).

Residues 1-32 form the signal peptide; it reads MRGGRGAPFWLWPLPKLALLPLLWVLFQRTRP. The Extracellular segment spans residues 33-516; that stretch reads QGSAGPLQCY…HLPDNTLRWK (484 aa). Residues Asn51 and Asn76 are each glycosylated (N-linked (GlcNAc...) asparagine). The Fibronectin type-III 1 domain maps to 131–231; it reads PRLGPDVDFS…PILSFQTPPS (101 aa). The WSXWS motif motif lies at 217 to 221; the sequence is WGEWS. Asn302, Asn311, Asn374, Asn382, and Asn467 each carry an N-linked (GlcNAc...) asparagine glycan. Fibronectin type-III domains are found at residues 322 to 417 and 419 to 511; these read APRS…LAPL and GPTL…LPDN. The chain crosses the membrane as a helical span at residues 517–537; it reads VLPGILFLWGLFLLGCGLSLA. Residues 538 to 636 are Cytoplasmic-facing; it reads TSGRCYHLRH…LGPPRPQVLA (99 aa). A Box 1 motif motif is present at residues 554–562; it reads VWEKVPDPA. The tract at residues 587 to 636 is disordered; it reads EVEEMEPPPVMESSQPAQATAPLDSGYEKHFLPTPEELGLLGPPRPQVLA. The segment covering 618–628 has biased composition (low complexity); that stretch reads LPTPEELGLLG.

It belongs to the type I cytokine receptor family. Type 2 subfamily. As to quaternary structure, component of a receptor complex composed of IL6ST/GP130, IL27RA/WSX1 and CNTFR which interacts with the neuroprotective peptide humanin. In terms of tissue distribution, highly expressed in lymphoid tissues such as spleen, lymph nodes and peripheral blood leukocytes. Weakly expressed in other tissues examined including heart, brain, fetal and adult lung, liver, skeletal muscle, kidney, pancreas, prostate, testis, ovary, small intestine, kidney and colon. In the lymphoid system, higher level expression in CD4+ T-cell subsets than in CD8+ T-cell subsets. Also weaker expression in CD19+ B-cells and monocytes.

It localises to the membrane. In terms of biological role, receptor for IL27. Requires IL6ST/GP130 to mediate signal transduction in response to IL27. This signaling system acts through STAT3 and STAT1. Acts as a receptor for the neuroprotective peptide humanin as part of a complex with IL6ST/GP130 and CNTFR. Involved in the regulation of Th1-type immune responses. Also appears to be involved in innate defense mechanisms. This Homo sapiens (Human) protein is Interleukin-27 receptor subunit alpha (IL27RA).